The primary structure comprises 245 residues: 4-hydroxy-tetrahydrodipicolinate reductase (245 aa).

Residues 7–12 (GARGKV), 75–77 (GTT), and 102–105 (APNF) each bind NAD(+). The active-site Proton donor/acceptor is His132. Residue His133 participates in (S)-2,3,4,5-tetrahydrodipicolinate binding. Residue Lys136 is the Proton donor of the active site. 142–143 (GT) contacts (S)-2,3,4,5-tetrahydrodipicolinate.

It belongs to the DapB family.

It localises to the cytoplasm. The enzyme catalyses (S)-2,3,4,5-tetrahydrodipicolinate + NAD(+) + H2O = (2S,4S)-4-hydroxy-2,3,4,5-tetrahydrodipicolinate + NADH + H(+). It catalyses the reaction (S)-2,3,4,5-tetrahydrodipicolinate + NADP(+) + H2O = (2S,4S)-4-hydroxy-2,3,4,5-tetrahydrodipicolinate + NADPH + H(+). Its pathway is amino-acid biosynthesis; L-lysine biosynthesis via DAP pathway; (S)-tetrahydrodipicolinate from L-aspartate: step 4/4. Catalyzes the conversion of 4-hydroxy-tetrahydrodipicolinate (HTPA) to tetrahydrodipicolinate. The chain is 4-hydroxy-tetrahydrodipicolinate reductase from Mycolicibacterium smegmatis (strain ATCC 700084 / mc(2)155) (Mycobacterium smegmatis).